A 165-amino-acid chain; its full sequence is Putative protein FAM86C1P (165 aa).

Belongs to the class I-like SAM-binding methyltransferase superfamily. EEF2KMT family. In terms of assembly, interacts with EEF2KMT.

This is Putative protein FAM86C1P from Homo sapiens (Human).